Reading from the N-terminus, the 276-residue chain is Diaminopimelate epimerase (276 aa).

Substrate-binding residues include asparagine 13, glutamine 46, and asparagine 66. Residue cysteine 75 is the Proton donor of the active site. Residues 76 to 77, asparagine 159, asparagine 192, and 210 to 211 each bind substrate; these read GN and ER. Cysteine 219 acts as the Proton acceptor in catalysis. 220–221 provides a ligand contact to substrate; it reads GT.

The protein belongs to the diaminopimelate epimerase family. As to quaternary structure, homodimer.

The protein resides in the cytoplasm. It catalyses the reaction (2S,6S)-2,6-diaminopimelate = meso-2,6-diaminopimelate. It functions in the pathway amino-acid biosynthesis; L-lysine biosynthesis via DAP pathway; DL-2,6-diaminopimelate from LL-2,6-diaminopimelate: step 1/1. Functionally, catalyzes the stereoinversion of LL-2,6-diaminopimelate (L,L-DAP) to meso-diaminopimelate (meso-DAP), a precursor of L-lysine and an essential component of the bacterial peptidoglycan. The chain is Diaminopimelate epimerase from Pseudomonas syringae pv. tomato (strain ATCC BAA-871 / DC3000).